An 849-amino-acid polypeptide reads, in one-letter code: Mechanosensitive ion channel protein 7 (849 aa).

The segment at 1-49 is disordered; sequence MEFRKPFKSHSSYKQIISTGDQNEKTKKKKKLANLDDGDIAKTQSSGSS. Positions 9 to 21 are enriched in polar residues; it reads SHSSYKQIISTGD. Transmembrane regions (helical) follow at residues 231 to 251, 274 to 294, 313 to 333, 344 to 364, 606 to 626, and 642 to 662; these read AITL…VLSL, LVLI…VFFI, TAVQ…FLFD, VLLL…LWLI, MISF…LEIA, and AFMF…LFII.

It belongs to the MscS (TC 1.A.23) family.

It is found in the membrane. Its function is as follows. Mechanosensitive channel that opens in response to stretch forces in the membrane lipid bilayer. This is Mechanosensitive ion channel protein 7 (MSL7) from Arabidopsis thaliana (Mouse-ear cress).